We begin with the raw amino-acid sequence, 426 residues long: DNA primase DnaG (426 aa).

Residues Asp-171–Pro-245 enclose the Toprim domain. Mg(2+) is bound by residues Glu-177, Asp-219, and Asp-221. Residues Lys-407 to Pro-426 are disordered. The span at Gln-413–Pro-426 shows a compositional bias: polar residues.

This sequence belongs to the archaeal DnaG primase family. As to quaternary structure, forms a ternary complex with MCM helicase and DNA. Component of the archaeal exosome complex. Mg(2+) is required as a cofactor.

The enzyme catalyses ssDNA + n NTP = ssDNA/pppN(pN)n-1 hybrid + (n-1) diphosphate.. Its function is as follows. RNA polymerase that catalyzes the synthesis of short RNA molecules used as primers for DNA polymerase during DNA replication. Also part of the exosome, which is a complex involved in RNA degradation. Acts as a poly(A)-binding protein that enhances the interaction between heteromeric, adenine-rich transcripts and the exosome. The chain is DNA primase DnaG from Thermofilum pendens (strain DSM 2475 / Hrk 5).